A 456-amino-acid chain; its full sequence is MTKHYDYIAIGGGSGGIASLNRAASYGKKCAIIEAKHLGGTCVNVGCVPKKVMFYGAHIAEAINNYAPDYGFDVEVKKFDFSKLIESRQAYISRIHTSYNNVLAKNNIDVINGFGKFVDAHTIEVTLADGTKEQVTADHILIATGGRPYRPNIKGQEYGIDSDGFFALTELPKRAAVIGAGYIAVELSGVLNSLGVETHLLVRRHAPMRNQDPLIVETLVEVLAQDGIQLHTNSTPSEIVKNADGSLTVRCDGQSDVTVDCVIWAAGRVPTTDKIGLENAGVETNEHGYVKVDKYQNTNVKGIYAVGDIIENGIELTPVAVAAGRRLSERLFNNKPTEYLDYSLVPTVVFSHPPIGTVGLTEPQAIEQYGAENVKVYKSSFTAMYTAVTQHRQPCKMKLVCVGKDEKVVGLHGIGFGVDEMIQGFAVAIKMGATKADFDNTVAIHPTGSEEFVTMR.

FAD-binding residues include Ser-14, Gly-15, Glu-34, Thr-41, Cys-42, and Lys-50. Ser-14 is a glutathione binding site. Residues Cys-42 and Cys-47 are joined by a disulfide bond. Glutathione is bound at residue Tyr-99. Gly-115 serves as a coordination point for FAD. NADP(+) contacts are provided by Ala-180, Ile-183, Glu-186, Arg-203, Arg-209, and Gly-267. FAD is bound at residue Asp-308. Residue Glu-315 coordinates NADP(+). Thr-317 is an FAD binding site. A glutathione-binding site is contributed by Arg-325. Position 348 (Val-348) interacts with NADP(+). His-445 serves as a coordination point for FAD. His-445 serves as the catalytic Proton acceptor.

Belongs to the class-I pyridine nucleotide-disulfide oxidoreductase family. Homodimer. Requires FAD as cofactor.

The protein localises to the cytoplasm. The catalysed reaction is 2 glutathione + NADP(+) = glutathione disulfide + NADPH + H(+). Functionally, catalyzes the reduction of glutathione disulfide (GSSG) to reduced glutathione (GSH). Constitutes the major mechanism to maintain a high GSH:GSSG ratio in the cytosol. The protein is Glutathione reductase (gor) of Haemophilus influenzae (strain ATCC 51907 / DSM 11121 / KW20 / Rd).